Reading from the N-terminus, the 428-residue chain is Methyl-branched lipid omega-hydroxylase (428 aa).

Cys-379 contacts heme.

This sequence belongs to the cytochrome P450 family. The cofactor is heme.

It catalyses the reaction a methyl-branched lipid + O2 + 2 reduced ferredoxin [iron-sulfur] cluster + 2 H(+) = an omega-hydroxy-methyl-branched lipid + H2O + 2 oxidized ferredoxin [iron-sulfur] cluster.. The enzyme catalyses cholest-4-en-3-one + 6 reduced [2Fe-2S]-[ferredoxin] + 3 O2 + 5 H(+) = (25R)-3-oxocholest-4-en-26-oate + 6 oxidized [2Fe-2S]-[ferredoxin] + 4 H2O. It participates in lipid metabolism; branched-chain fatty acid metabolism. Its function is as follows. Primarily hydroxylates the omega-carbon of a number of methyl-branched lipids, including (2E,6E)-farnesol, phytanate, geranylgeraniol, 15-methylpalmitate and (2E,6E)-farnesyl diphosphate. Also catalyzes the sequential oxidation of the terminal methyl of cholest-4-en-3-one into (25R)-26-hydroxycholest-4-en-3-one (alcohol), (25R)-26-oxocholest-4-en-3-one (aldehyde), to finally yield the carboxylic acid (25R)-3-oxocholest-4-en-26-oate. Also able to sequentially oxidize cholesterol itself, not only cholest-4-en-3-one. This Mycobacterium bovis (strain ATCC BAA-935 / AF2122/97) protein is Methyl-branched lipid omega-hydroxylase (cyp124).